Reading from the N-terminus, the 262-residue chain is MGFVGDFCDDVARSIGFLSRIPMPARHFEGYDGRLSRAVRAFPFAGLAIALPSAAVAMALMALQVSSLFAAFVVVAIQALVTGALHEDGLGDTADGFGGGRDREAALAIMKDSRIGTYAAVALILSFGLRVSAFASILPLFSPLGAAMAILGAACLSRAAMVWHWSSLPPARSSGVAASAGEPEPAATRFALAFGLLVAMLLFYLAQVPALGVIAALVAFLATVKGFARLAMRKIGGQTGDTIGATQQLTEIAVLGALALTV.

Helical transmembrane passes span 41–63, 68–85, 115–134, 141–163, and 201–221; these read AFPF…LMAL, LFAA…TGAL, IGTY…VSAF, FSPL…AMVW, and LLFY…VAFL.

This sequence belongs to the CobS family. Associated with a large complex of proteins. It depends on Mg(2+) as a cofactor.

It is found in the cell inner membrane. It carries out the reaction alpha-ribazole + adenosylcob(III)inamide-GDP = adenosylcob(III)alamin + GMP + H(+). The catalysed reaction is alpha-ribazole 5'-phosphate + adenosylcob(III)inamide-GDP = adenosylcob(III)alamin 5'-phosphate + GMP + H(+). The protein operates within cofactor biosynthesis; adenosylcobalamin biosynthesis; adenosylcobalamin from cob(II)yrinate a,c-diamide: step 7/7. Joins adenosylcobinamide-GDP and alpha-ribazole to generate adenosylcobalamin (Ado-cobalamin). Also synthesizes adenosylcobalamin 5'-phosphate from adenosylcobinamide-GDP and alpha-ribazole 5'-phosphate. This is Adenosylcobinamide-GDP ribazoletransferase (cobV) from Sinorhizobium sp.